Here is an 815-residue protein sequence, read N- to C-terminus: Glycogen phosphorylase (815 aa).

Lysine 662 is modified (N6-(pyridoxal phosphate)lysine).

Belongs to the glycogen phosphorylase family. The cofactor is pyridoxal 5'-phosphate.

The enzyme catalyses [(1-&gt;4)-alpha-D-glucosyl](n) + phosphate = [(1-&gt;4)-alpha-D-glucosyl](n-1) + alpha-D-glucose 1-phosphate. Functionally, phosphorylase is an important allosteric enzyme in carbohydrate metabolism. Enzymes from different sources differ in their regulatory mechanisms and in their natural substrates. However, all known phosphorylases share catalytic and structural properties. The polypeptide is Glycogen phosphorylase (glgP) (Shigella flexneri).